Here is a 268-residue protein sequence, read N- to C-terminus: Satratoxin biosynthesis SC1 cluster protein 4 (268 aa).

A run of 4 helical transmembrane segments spans residues 34-54, 78-98, 113-133, and 145-165; these read VWLV…VHIF, LFAI…GLAI, HLAG…IKIV, and AVIW…APIY.

The protein belongs to the SAT4 family.

Its subcellular location is the membrane. The protein operates within mycotoxin biosynthesis. Its function is as follows. Part of the satratoxin SC1 cluster involved in the biosynthesis of satratoxins, trichothecene mycotoxins that are associated with human food poisonings. Satratoxins are suggested to be made by products of multiple gene clusters (SC1, SC2 and SC3) that encode 21 proteins in all, including polyketide synthases, acetyltransferases, and other enzymes expected to modify the trichothecene skeleton. SC1 encodes 10 proteins, SAT1 to SAT10. The largest are SAT8, which encodes a putative polyketide synthase (PKS) with a conventional non-reducing architecture, and SAT10, a putative protein containing four ankyrin repeats and thus may be involved in protein scaffolding. The putative short-chain reductase SAT3 may assist the PKS in some capacity. SAT6 contains a secretory lipase domain and acts probably as a trichothecene esterase. SAT5 encodes a putative acetyltransferase, and so, with SAT6, may affect endogenous protection from toxicity. The probable transcription factor SAT9 may regulate the expression of the SC1 cluster. SC2 encodes proteins SAT11 to SAT16, the largest of which encodes the putative reducing PKS SAT13. SAT11 is a cytochrome P450 monooxygenase, while SAT14 and SAT16 are probable acetyltransferases. The SC2 cluster may be regulated by the transcription factor SAT15. SC3 is a small cluster that encodes 5 proteins, SAT17 to SAT21. SAT21 is a putative MFS-type transporter which may have a role in exporting secondary metabolites. The four other proteins putatively encoded in SC3 include the taurine hydroxylase-like protein SAT17, the O-methyltransferase SAT18, the acetyltransferase SAT19, and the Cys6-type zinc finger SAT20, the latter being probably involved in regulation of SC3 expression. In Stachybotrys chartarum (strain CBS 109288 / IBT 7711) (Toxic black mold), this protein is Satratoxin biosynthesis SC1 cluster protein 4.